The sequence spans 321 residues: MTKQVGKKFAWVIKNFSSLQCKKFYSVPFQIGDCKWRLSIYPKGNNCDYLSLFLEVADFKSLPSGWRRYVKLRLYIVKQLSTLIRKTHRWFDQEMWGWGFLYMLPLTKLHDEKEGFLVNGELMIVAEVDALGFIDPLNESEESEDPTQPLKKIKLNDDGAVSSDLLEEASPRKESMEVNGFQVLPSQVESVRLIFERHPDIASEFRAKNQYLRKACMDFLLSLVETLCQSLQEFSNEDLVEADIALTYLKDAGFKVDWLEKKLDQVRDKKEKERSCLAKLQETEETLLKLKQKCTELDALMDTEKAELSAIRTPLSFEDVV.

The region spanning Gly-6–Val-128 is the MATH domain. Residues Lys-255 to Ala-310 adopt a coiled-coil conformation.

The protein is MATH domain and coiled-coil domain-containing protein At3g58410 of Arabidopsis thaliana (Mouse-ear cress).